The following is a 558-amino-acid chain: Armadillo repeat-containing X-linked protein 5 (558 aa).

Basic and acidic residues-rich tracts occupy residues 1-14 (MVDS…RGKA) and 139-156 (KSHD…REET). Disordered regions lie at residues 1–35 (MVDS…GKTQ) and 139–165 (KSHD…SSDE). One copy of the ARM 1 repeat lies at 300-339 (CKSRGFSLEPKEFDKLVALLKLTKDPFIHEIATMIMGISP). A disordered region spans residues 369–388 (HPGALSMVDDSSESSEEPKS). ARM repeat units follow at residues 422–461 (IKFE…CLSK), 463–503 (HANT…NINF), and 520–558 (SELI…ILKL).

The protein belongs to the eutherian X-chromosome-specific Armcx family.

This chain is Armadillo repeat-containing X-linked protein 5 (ARMCX5), found in Homo sapiens (Human).